The following is a 272-amino-acid chain: MMACHC-like protein (272 aa).

Substrate-binding positions include Asp-121, 132–135 (ILMQ), and 146–148 (YYQ).

It belongs to the MMACHC family. Requires FAD as cofactor. FMN serves as cofactor.

It is found in the cytoplasm. Functionally, catalyzes the reductive dealkylation of cyanocobalamin to cob(II)alamin, using FAD or FMN as cofactor and NADPH as cosubstrate. Can also catalyze the glutathione-dependent reductive demethylation of methylcobalamin, and, with much lower efficiency, the glutathione-dependent reductive demethylation of adenosylcobalamin. Under anaerobic conditions cob(I)alamin is the first product; it is highly reactive and is converted to aquocob(II)alamin in the presence of oxygen. Binds cyanocobalamin, adenosylcobalamin, methylcobalamin and other, related vitamin B12 derivatives. The polypeptide is MMACHC-like protein (cblc-1) (Caenorhabditis elegans).